A 359-amino-acid polypeptide reads, in one-letter code: Phosphoribosylformylglycinamidine cyclo-ligase (359 aa).

It belongs to the AIR synthase family.

It is found in the cytoplasm. It catalyses the reaction 2-formamido-N(1)-(5-O-phospho-beta-D-ribosyl)acetamidine + ATP = 5-amino-1-(5-phospho-beta-D-ribosyl)imidazole + ADP + phosphate + H(+). It functions in the pathway purine metabolism; IMP biosynthesis via de novo pathway; 5-amino-1-(5-phospho-D-ribosyl)imidazole from N(2)-formyl-N(1)-(5-phospho-D-ribosyl)glycinamide: step 2/2. This chain is Phosphoribosylformylglycinamidine cyclo-ligase, found in Brucella canis (strain ATCC 23365 / NCTC 10854 / RM-666).